Reading from the N-terminus, the 281-residue chain is Undecaprenyl-diphosphatase (281 aa).

The next 7 helical transmembrane spans lie at 49–69, 92–112, 116–136, 152–172, 196–216, 224–244, and 257–277; these read SANTFKIVIQLGSIFAAAWIF, LHIFIGLIPAGIMGLLFDDFI, LFSVPTVLIGLALGALLMIAA, MTYKQALIIGVAQCLALWPGF, TFIMAVPIMFAASAKSLASNI, ILFYIVGFIAAFIFGVLSIRL, and FAIYRLILVAVIAVLYFGFGI.

It belongs to the UppP family.

Its subcellular location is the cell membrane. It carries out the reaction di-trans,octa-cis-undecaprenyl diphosphate + H2O = di-trans,octa-cis-undecaprenyl phosphate + phosphate + H(+). In terms of biological role, catalyzes the dephosphorylation of undecaprenyl diphosphate (UPP). Confers resistance to bacitracin. The chain is Undecaprenyl-diphosphatase from Macrococcus caseolyticus (strain JCSC5402) (Macrococcoides caseolyticum).